Consider the following 526-residue polypeptide: Peptide chain release factor 3 (526 aa).

Residues 9–277 (DKRRTFAIIS…GIVEWAPRPQ (269 aa)) form the tr-type G domain. GTP-binding positions include 18–25 (SHPDAGKT), 86–90 (DTPGH), and 140–143 (NKLD).

Belongs to the TRAFAC class translation factor GTPase superfamily. Classic translation factor GTPase family. PrfC subfamily.

It is found in the cytoplasm. Increases the formation of ribosomal termination complexes and stimulates activities of RF-1 and RF-2. It binds guanine nucleotides and has strong preference for UGA stop codons. It may interact directly with the ribosome. The stimulation of RF-1 and RF-2 is significantly reduced by GTP and GDP, but not by GMP. This chain is Peptide chain release factor 3, found in Shewanella loihica (strain ATCC BAA-1088 / PV-4).